The chain runs to 167 residues: Peptide deformylase (167 aa).

The Fe cation site is built by Cys91 and His133. The active site involves Glu134. Residue His137 participates in Fe cation binding.

The protein belongs to the polypeptide deformylase family. The cofactor is Fe(2+).

It catalyses the reaction N-terminal N-formyl-L-methionyl-[peptide] + H2O = N-terminal L-methionyl-[peptide] + formate. Functionally, removes the formyl group from the N-terminal Met of newly synthesized proteins. Requires at least a dipeptide for an efficient rate of reaction. N-terminal L-methionine is a prerequisite for activity but the enzyme has broad specificity at other positions. This is Peptide deformylase from Baumannia cicadellinicola subsp. Homalodisca coagulata.